Consider the following 125-residue polypeptide: Small ribosomal subunit protein bS6m (125 aa).

This sequence belongs to the bacterial ribosomal protein bS6 family. Component of the mitochondrial small ribosomal subunit (mt-SSU). Mature mammalian 55S mitochondrial ribosomes consist of a small (28S) and a large (39S) subunit. The 28S small subunit contains a 12S ribosomal RNA (12S mt-rRNA) and 30 different proteins. The 39S large subunit contains a 16S rRNA (16S mt-rRNA), a copy of mitochondrial valine transfer RNA (mt-tRNA(Val)), which plays an integral structural role, and 52 different proteins.

The protein resides in the mitochondrion. In Homo sapiens (Human), this protein is Small ribosomal subunit protein bS6m (MRPS6).